The sequence spans 303 residues: tRNA (guanine-N(7)-)-methyltransferase (303 aa).

The interval 1–64 (MPKPHQVQVI…STSDKISLPR (64 aa)) is disordered. The span at 10–38 (IKDRETQLREQQEAESKRRTYRDVKEETR) shows a compositional bias: basic and acidic residues. Residues glycine 118, 141–142 (EI), 177–178 (NA), and cysteine 197 contribute to the S-adenosyl-L-methionine site. Residue aspartate 200 is part of the active site. Position 275–277 (275–277 (TEE)) interacts with S-adenosyl-L-methionine.

This sequence belongs to the class I-like SAM-binding methyltransferase superfamily. TrmB family. As to quaternary structure, forms a complex with TRM82.

The protein resides in the nucleus. It catalyses the reaction guanosine(46) in tRNA + S-adenosyl-L-methionine = N(7)-methylguanosine(46) in tRNA + S-adenosyl-L-homocysteine. Its pathway is tRNA modification; N(7)-methylguanine-tRNA biosynthesis. Its function is as follows. Catalyzes the formation of N(7)-methylguanine at position 46 (m7G46) in tRNA. This is tRNA (guanine-N(7)-)-methyltransferase from Scheffersomyces stipitis (strain ATCC 58785 / CBS 6054 / NBRC 10063 / NRRL Y-11545) (Yeast).